A 466-amino-acid chain; its full sequence is 3-isopropylmalate dehydratase large subunit (466 aa).

The [4Fe-4S] cluster site is built by Cys347, Cys407, and Cys410.

This sequence belongs to the aconitase/IPM isomerase family. LeuC type 1 subfamily. As to quaternary structure, heterodimer of LeuC and LeuD. Requires [4Fe-4S] cluster as cofactor.

The catalysed reaction is (2R,3S)-3-isopropylmalate = (2S)-2-isopropylmalate. It functions in the pathway amino-acid biosynthesis; L-leucine biosynthesis; L-leucine from 3-methyl-2-oxobutanoate: step 2/4. In terms of biological role, catalyzes the isomerization between 2-isopropylmalate and 3-isopropylmalate, via the formation of 2-isopropylmaleate. The chain is 3-isopropylmalate dehydratase large subunit from Buchnera aphidicola subsp. Diuraphis noxia.